Reading from the N-terminus, the 314-residue chain is Olfactory receptor 10A6 (314 aa).

Residues 1-25 are Extracellular-facing; the sequence is MERQNQSCVVEFILLGFSNYPELQG. Asn5 carries an N-linked (GlcNAc...) asparagine glycan. A helical membrane pass occupies residues 26 to 46; that stretch reads QLFVAFLVIYLVTLIGNAIII. Residues 47 to 54 are Cytoplasmic-facing; that stretch reads VIVSLDQS. A helical membrane pass occupies residues 55–75; the sequence is LHVPMYLFLLNLSVVDLSFSA. Over 76–99 the chain is Extracellular; sequence VIMPEMLVVLSTEKTTISFGGCFA. A disulfide bridge connects residues Cys97 and Cys189. A helical membrane pass occupies residues 100 to 120; sequence QMYFILLFGGAECFLLGAMAY. Topologically, residues 121-139 are cytoplasmic; it reads DRFAAICHPLNYQMIMNKG. The helical transmembrane segment at 140-160 threads the bilayer; it reads VFMKLIIFSWALGFMLGTVQT. The Extracellular portion of the chain corresponds to 161–197; that stretch reads SWVSSFPFCGLNEINHISCETPAVLELACADTFLFEI. The helical transmembrane segment at 198 to 217 threads the bilayer; sequence YAFTGTFLIILVPFLLILLS. Residues 218 to 237 lie on the Cytoplasmic side of the membrane; the sequence is YIRVLFAILKMPSTTGRQKA. Residues 238-258 traverse the membrane as a helical segment; it reads FSTCAAHLTSVTLFYGTASMT. The Extracellular segment spans residues 259 to 271; sequence YLQPKSGYSPETK. The chain crosses the membrane as a helical span at residues 272-292; sequence KVMSLSYSLLTPLLNLLIYSL. The Cytoplasmic portion of the chain corresponds to 293-314; it reads RNSEMKRALMKLWRRRVVLHTI.

It belongs to the G-protein coupled receptor 1 family.

It localises to the cell membrane. Odorant receptor. The protein is Olfactory receptor 10A6 (OR10A6) of Homo sapiens (Human).